Here is a 183-residue protein sequence, read N- to C-terminus: Ubiquitin-conjugating enzyme E2 H (183 aa).

Residues 1–150 form the UBC core domain; that stretch reads MSSPSPGKRR…IKEYIQKYAT (150 aa). The residue at position 60 (Lys-60) is an N6-acetyllysine. Cys-87 (glycyl thioester intermediate) is an active-site residue. The disordered stretch occupies residues 152–183; it reads EALKEQEEGTGDSSSESSMSDFSEDEAQDMEL. Positions 163–172 are enriched in low complexity; that stretch reads DSSSESSMSD. The span at 173-183 shows a compositional bias: acidic residues; it reads FSEDEAQDMEL.

It belongs to the ubiquitin-conjugating enzyme family. As to quaternary structure, interacts with MAEA and WDR26, components of the CTLH complex that contains GID4, RANBP9 and/or RANBP10, MKLN1, MAEA, RMND5A (or alternatively its paralog RMND5B), GID8, ARMC8, WDR26 and YPEL5. Autoubiquitinated in vitro in the presence of NEDD4L.

The enzyme catalyses S-ubiquitinyl-[E1 ubiquitin-activating enzyme]-L-cysteine + [E2 ubiquitin-conjugating enzyme]-L-cysteine = [E1 ubiquitin-activating enzyme]-L-cysteine + S-ubiquitinyl-[E2 ubiquitin-conjugating enzyme]-L-cysteine.. The catalysed reaction is S-ubiquitinyl-[E1 ubiquitin-activating enzyme]-L-cysteine + [acceptor protein]-L-lysine = [E1 ubiquitin-activating enzyme]-L-cysteine + N(6)-monoubiquitinyl-[acceptor protein]-L-lysine.. It participates in protein modification; protein ubiquitination. Functionally, accepts ubiquitin from the E1 complex and catalyzes its covalent attachment to other proteins. E2 ubiquitin conjugating enzyme that transfers ubiquitin to MAEA, a core component of the CTLH E3 ubiquitin-protein ligase complex. In vitro catalyzes 'Lys-11'- and 'Lys-48'-linked polyubiquitination. Capable, in vitro, to ubiquitinate histone H2A. The protein is Ubiquitin-conjugating enzyme E2 H (UBE2H) of Homo sapiens (Human).